Here is a 324-residue protein sequence, read N- to C-terminus: Beta-ketoacyl-[acyl-carrier-protein] synthase III (324 aa).

Catalysis depends on residues cysteine 112 and histidine 249. The segment at 250–254 (QANRR) is ACP-binding. The active site involves asparagine 279.

This sequence belongs to the thiolase-like superfamily. FabH family. Homodimer.

It is found in the cytoplasm. It catalyses the reaction malonyl-[ACP] + acetyl-CoA + H(+) = 3-oxobutanoyl-[ACP] + CO2 + CoA. Its pathway is lipid metabolism; fatty acid biosynthesis. In terms of biological role, catalyzes the condensation reaction of fatty acid synthesis by the addition to an acyl acceptor of two carbons from malonyl-ACP. Catalyzes the first condensation reaction which initiates fatty acid synthesis and may therefore play a role in governing the total rate of fatty acid production. Possesses both acetoacetyl-ACP synthase and acetyl transacylase activities. Its substrate specificity determines the biosynthesis of branched-chain and/or straight-chain of fatty acids. This chain is Beta-ketoacyl-[acyl-carrier-protein] synthase III, found in Streptococcus pyogenes serotype M3 (strain ATCC BAA-595 / MGAS315).